We begin with the raw amino-acid sequence, 278 residues long: Leucine-rich repeat-containing protein 10 (278 aa).

8 LRR repeats span residues 30–51 (LDRM…VCSF), 52–74 (QELV…LGQL), 76–97 (NLQI…VCTL), 98–121 (KQLC…SLLQ), 123–143 (LRTL…VCEL), 144–166 (SLLK…LQRL), 167–189 (RELR…LLHM), and 191–213 (FLEI…HLSS). Residues 239–250 (RWAEETPEPDPR) are compositionally biased toward basic and acidic residues. The interval 239–278 (RWAEETPEPDPRKARRYALAREESQEAQLPALPPLPPTNS) is disordered. Positions 269 to 278 (ALPPLPPTNS) are enriched in pro residues.

It is found in the nucleus. May play important roles in cardiac development and/or cardiac function. This chain is Leucine-rich repeat-containing protein 10 (LRRC10), found in Bos taurus (Bovine).